A 1013-amino-acid polypeptide reads, in one-letter code: A-type ATP synthase subunit A (1013 aa).

The region spanning 392–525 (FLGYVIGDGT…LTYLLAKLGI (134 aa)) is the DOD-type homing endonuclease domain.

It belongs to the ATPase alpha/beta chains family. As to quaternary structure, has multiple subunits with at least A(3), B(3), C, D, E, F, H, I and proteolipid K(x). Post-translationally, this protein undergoes a protein self splicing that involves a post-translational excision of the VDE intervening region (intein) followed by peptide ligation.

The protein resides in the cell membrane. It carries out the reaction ATP + H2O + 4 H(+)(in) = ADP + phosphate + 5 H(+)(out). Functionally, component of the A-type ATP synthase that produces ATP from ADP in the presence of a proton gradient across the membrane. The A chain is the catalytic subunit. In Pyrococcus furiosus (strain ATCC 43587 / DSM 3638 / JCM 8422 / Vc1), this protein is A-type ATP synthase subunit A.